A 92-amino-acid chain; its full sequence is Small ribosomal subunit protein uS19 (92 aa).

Belongs to the universal ribosomal protein uS19 family.

Functionally, protein S19 forms a complex with S13 that binds strongly to the 16S ribosomal RNA. The chain is Small ribosomal subunit protein uS19 from Bacillus pumilus (strain SAFR-032).